The primary structure comprises 221 residues: Small histidine-alanine-rich protein (221 aa).

The signal sequence occupies residues 1–21 (MVSFSKNKILSAAVFASVLLL). Residues 52–67 (AHAGDAHHAHHVADAH) are compositionally biased toward basic and acidic residues. 2 disordered regions span residues 52–141 (AHAG…AANA) and 180–221 (AHHD…HLHH). Repeat copies occupy residues 57-59 (AHH) and 60-62 (AHH). Residues 57–68 (AHHAHHVADAHH) form a 4 X 3 AA approximate tandem repeats of A-H-H region. The 1-3; approximate repeat unit spans residues 63–65 (VAD). 13 repeat units span residues 66 to 68 (AHH), 69 to 74 (AHHAAN), 75 to 80 (AHHAAN), 81 to 86 (AHHAAN), 87 to 92 (AHHAAN), 93 to 98 (AHHAAN), 99 to 104 (AHHAAN), 105 to 110 (AHHAAN), 111 to 116 (AHHAAN), 117 to 122 (AHHAAN), 123 to 128 (AHHAAN), 129 to 134 (AHHAAN), and 135 to 140 (AHHAAN). The interval 69–146 (AHHAANAHHA…HAANAHHAAD (78 aa)) is 13 X 6 AA approximate tandem repeats of A-H-H-A-A-N. Residues 75 to 141 (AHHAANAHHA…AANAHHAANA (67 aa)) show a composition bias toward low complexity. The 2-13; approximate repeat unit spans residues 141 to 146 (AHHAAD). Tandem repeats lie at residues 176-180 (HHDDA), 181-185 (HHDGA), 186-190 (HHDDA), 191-195 (HHDGA), 196-200 (HHDGA), 201-205 (HHDGA), and 206-210 (HHDGA). A 7 X 5 AA tandem repeats of H-H-D-[DG]-A region spans residues 176–210 (HHDDAHHDGAHHDDAHHDGAHHDGAHHDGAHHDGA). Positions 180-211 (AHHDGAHHDDAHHDGAHHDGAHHDGAHHDGAH) are enriched in basic and acidic residues.

This chain is Small histidine-alanine-rich protein, found in Plasmodium falciparum (isolate FC27 / Papua New Guinea).